The sequence spans 360 residues: Phospho-N-acetylmuramoyl-pentapeptide-transferase (360 aa).

10 consecutive transmembrane segments (helical) span residues 25–45 (RTIY…PWLI), 73–93 (TMGG…WADL), 94–114 (TNAY…IGFV), 134–154 (FCLQ…GLNG), 173–193 (PGYV…VNLT), 198–218 (GLAI…AYVA), 240–260 (VFCG…AYPA), 262–282 (IFMG…VAIL), 287–307 (LALV…ILQV), and 337–357 (KVIV…VSTL).

This sequence belongs to the glycosyltransferase 4 family. MraY subfamily. The cofactor is Mg(2+).

It is found in the cell inner membrane. It catalyses the reaction UDP-N-acetyl-alpha-D-muramoyl-L-alanyl-gamma-D-glutamyl-meso-2,6-diaminopimeloyl-D-alanyl-D-alanine + di-trans,octa-cis-undecaprenyl phosphate = di-trans,octa-cis-undecaprenyl diphospho-N-acetyl-alpha-D-muramoyl-L-alanyl-D-glutamyl-meso-2,6-diaminopimeloyl-D-alanyl-D-alanine + UMP. It functions in the pathway cell wall biogenesis; peptidoglycan biosynthesis. In terms of biological role, catalyzes the initial step of the lipid cycle reactions in the biosynthesis of the cell wall peptidoglycan: transfers peptidoglycan precursor phospho-MurNAc-pentapeptide from UDP-MurNAc-pentapeptide onto the lipid carrier undecaprenyl phosphate, yielding undecaprenyl-pyrophosphoryl-MurNAc-pentapeptide, known as lipid I. The protein is Phospho-N-acetylmuramoyl-pentapeptide-transferase of Desulfatibacillum aliphaticivorans.